A 165-amino-acid polypeptide reads, in one-letter code: DELTA-actitoxin-Oor1a (165 aa).

Residues 1–17 form an N-terminal region region; the sequence is ATFRVLAKVLAELGKVS. Phosphocholine contacts are provided by serine 41, valine 74, serine 92, proline 94, and tyrosine 125. A trp-rich region, which is important for the binding to lipid membrane region spans residues 92 to 107; the sequence is SVPYDYNLYSNWWNVK.

Belongs to the actinoporin family. Sea anemone subfamily. In terms of assembly, octamer or nonamer in membranes. Monomer in the soluble state.

The protein resides in the secreted. Its subcellular location is the nematocyst. It is found in the target cell membrane. In terms of biological role, pore-forming protein that forms cations-selective hydrophilic pores of around 1 nm and causes cardiac stimulation and cytolysis. Pore formation is a multi-step process that involves specific recognition of membrane sphingomyelin (but neither cholesterol nor phosphatidylcholine) using aromatic rich region and adjacent phosphocholine (POC) binding site, firm binding to the membrane (mainly driven by hydrophobic interactions) accompanied by the transfer of the N-terminal region to the lipid-water interface and finally pore formation after oligomerization of monomers. Cytolytic effects include red blood cells hemolysis, platelet aggregation and lysis, cytotoxic and cytostatic effects on fibroblasts. Lethality in mammals has been ascribed to severe vasospasm of coronary vessels, cardiac arrhythmia, and inotropic effects. In Oulactis orientalis (Japan anemone), this protein is DELTA-actitoxin-Oor1a.